The sequence spans 400 residues: MLNSLDLEGRPQDTRIVVAMSGGVDSSTTAALLKSEGYDVVGITLQLYDHGAAIHRKGACCAGQDIHDARAVADRIGIPHYVLDYESRFQESVIDSFAASYATGETPVPCIECNRSIKFRDLLSTARELGASALATGHYVSSRRLADGSRALVCASDADRDQSYFLFATTRDQLDYLRFPLGDMTKPQTRELARKFGLSVADKHDSQDICFVPTGRYTDVVGRLKPNAMEPGEIVDLDGRVLGKHQGIVHFTVGQRRGLGIASTAPLYVLRLEPSTRRVVVGPREALRMDRIVLRDVNWIGDSSLDRAVGDGLELFVRVRSTRRPQPAWLRAQDGGYQVELVAGEDGVSPGQACVFYDAPAGQARVLGGGFIKSATPRAAGKSALRGAPASRPQVADARG.

ATP contacts are provided by residues 19–26 (AMSGGVDS) and Leu45. Cys113 serves as the catalytic Nucleophile. An intrachain disulfide couples Cys113 to Cys210. Gly137 contributes to the ATP binding site. An interaction with tRNA region spans residues 160-162 (RDQ). Cys210 functions as the Cysteine persulfide intermediate in the catalytic mechanism.

This sequence belongs to the MnmA/TRMU family.

The protein resides in the cytoplasm. It carries out the reaction S-sulfanyl-L-cysteinyl-[protein] + uridine(34) in tRNA + AH2 + ATP = 2-thiouridine(34) in tRNA + L-cysteinyl-[protein] + A + AMP + diphosphate + H(+). Catalyzes the 2-thiolation of uridine at the wobble position (U34) of tRNA, leading to the formation of s(2)U34. This is tRNA-specific 2-thiouridylase MnmA from Rhodopseudomonas palustris (strain BisB18).